Here is a 231-residue protein sequence, read N- to C-terminus: Cuticle protein LPCP-23 (231 aa).

The N-terminal stretch at 1 to 17 (MAFKFVVFAAALAYANA) is a signal peptide. A run of 2 repeats spans residues 130 to 133 (AAPV) and 199 to 202 (AAPV).

In terms of biological role, component of the cuticle of Tenebrio molitor. This Tenebrio molitor (Yellow mealworm beetle) protein is Cuticle protein LPCP-23 (LPCP-23).